Reading from the N-terminus, the 182-residue chain is Small ribosomal subunit protein uS4c (182 aa).

Residues M82–N143 enclose the S4 RNA-binding domain.

The protein belongs to the universal ribosomal protein uS4 family. As to quaternary structure, part of the 30S ribosomal subunit. Contacts protein S5. The interaction surface between S4 and S5 is involved in control of translational fidelity.

The protein resides in the plastid. Its subcellular location is the chloroplast. One of the primary rRNA binding proteins, it binds directly to 16S rRNA where it nucleates assembly of the body of the 30S subunit. Its function is as follows. With S5 and S12 plays an important role in translational accuracy. In Tigridia sp. (strain Lejeune 1997), this protein is Small ribosomal subunit protein uS4c (rps4).